A 315-amino-acid chain; its full sequence is Phosphatidylglycerol--prolipoprotein diacylglyceryl transferase (315 aa).

2 helical membrane passes run 19–39 (FTIH…VWIL) and 93–113 (VWEG…VAFL). Arg-141 provides a ligand contact to a 1,2-diacyl-sn-glycero-3-phospho-(1'-sn-glycerol). 2 helical membrane-spanning segments follow: residues 188 to 208 (LFHP…ALII) and 256 to 276 (VWTA…LYQY).

It belongs to the Lgt family.

Its subcellular location is the cell membrane. It catalyses the reaction L-cysteinyl-[prolipoprotein] + a 1,2-diacyl-sn-glycero-3-phospho-(1'-sn-glycerol) = an S-1,2-diacyl-sn-glyceryl-L-cysteinyl-[prolipoprotein] + sn-glycerol 1-phosphate + H(+). It functions in the pathway protein modification; lipoprotein biosynthesis (diacylglyceryl transfer). In terms of biological role, catalyzes the transfer of the diacylglyceryl group from phosphatidylglycerol to the sulfhydryl group of the N-terminal cysteine of a prolipoprotein, the first step in the formation of mature lipoproteins. This is Phosphatidylglycerol--prolipoprotein diacylglyceryl transferase from Bifidobacterium longum (strain DJO10A).